The primary structure comprises 532 residues: 2,3-bisphosphoglycerate-independent phosphoglycerate mutase (532 aa).

Positions 15 and 65 each coordinate Mn(2+). S65 serves as the catalytic Phosphoserine intermediate. Residues H126, 156–157 (RD), R188, R194, 258–261 (RPDR), and K331 each bind substrate. D398, H402, D439, H440, and H457 together coordinate Mn(2+).

It belongs to the BPG-independent phosphoglycerate mutase family. As to quaternary structure, monomer. Requires Mn(2+) as cofactor.

The catalysed reaction is (2R)-2-phosphoglycerate = (2R)-3-phosphoglycerate. The protein operates within carbohydrate degradation; glycolysis; pyruvate from D-glyceraldehyde 3-phosphate: step 3/5. Its function is as follows. Catalyzes the interconversion of 2-phosphoglycerate and 3-phosphoglycerate. The sequence is that of 2,3-bisphosphoglycerate-independent phosphoglycerate mutase from Synechococcus elongatus (strain ATCC 33912 / PCC 7942 / FACHB-805) (Anacystis nidulans R2).